The chain runs to 791 residues: Penicillin-binding protein 1A (791 aa).

Residues 1–6 are Cytoplasmic-facing; it reads MYKSLF. A helical; Signal-anchor for type II membrane protein membrane pass occupies residues 7–27; it reads FCLKILALLFLIGCGIVAYII. At 28-791 the chain is on the periplasmic side; that stretch reads YYYSRDLPDY…TEKDQSQEIY (764 aa). The tract at residues 49 to 220 is transglycosylase; that stretch reads TRIYSRDGKL…SELNPEKNYA (172 aa). E87 (proton donor; for transglycosylase activity) is an active-site residue. Positions 398–711 are transpeptidase; sequence DVIVVEPVKD…SSVVLPIFID (314 aa). The active-site Acyl-ester intermediate; for transpeptidase activity is the S457.

The protein in the N-terminal section; belongs to the glycosyltransferase 51 family. This sequence in the C-terminal section; belongs to the transpeptidase family.

The protein localises to the cell inner membrane. The enzyme catalyses [GlcNAc-(1-&gt;4)-Mur2Ac(oyl-L-Ala-gamma-D-Glu-L-Lys-D-Ala-D-Ala)](n)-di-trans,octa-cis-undecaprenyl diphosphate + beta-D-GlcNAc-(1-&gt;4)-Mur2Ac(oyl-L-Ala-gamma-D-Glu-L-Lys-D-Ala-D-Ala)-di-trans,octa-cis-undecaprenyl diphosphate = [GlcNAc-(1-&gt;4)-Mur2Ac(oyl-L-Ala-gamma-D-Glu-L-Lys-D-Ala-D-Ala)](n+1)-di-trans,octa-cis-undecaprenyl diphosphate + di-trans,octa-cis-undecaprenyl diphosphate + H(+). It catalyses the reaction Preferential cleavage: (Ac)2-L-Lys-D-Ala-|-D-Ala. Also transpeptidation of peptidyl-alanyl moieties that are N-acyl substituents of D-alanine.. Its pathway is cell wall biogenesis; peptidoglycan biosynthesis. Its function is as follows. Cell wall formation. Synthesis of cross-linked peptidoglycan from the lipid intermediates. The enzyme has a penicillin-insensitive transglycosylase N-terminal domain (formation of linear glycan strands) and a penicillin-sensitive transpeptidase C-terminal domain (cross-linking of the peptide subunits). This chain is Penicillin-binding protein 1A (mrcA), found in Rickettsia bellii (strain RML369-C).